The primary structure comprises 204 residues: uncharacterized protein (204 aa).

Residues 118 to 169 are disordered; that stretch reads FPAASERPMPSRRLSKATQNVQTRPSERPAPCHRRPGPRGPGGRDPPEACHP.

This is an uncharacterized protein from Encephalitozoon cuniculi (strain GB-M1) (Microsporidian parasite).